Consider the following 701-residue polypeptide: Elongation factor G (701 aa).

The tr-type G domain occupies 8–290 (ARYRNIGISA…AVIEYLPAPT (283 aa)). GTP-binding positions include 17–24 (AHIDAGKT), 88–92 (DTPGH), and 142–145 (NKMD).

It belongs to the TRAFAC class translation factor GTPase superfamily. Classic translation factor GTPase family. EF-G/EF-2 subfamily.

The protein resides in the cytoplasm. Functionally, catalyzes the GTP-dependent ribosomal translocation step during translation elongation. During this step, the ribosome changes from the pre-translocational (PRE) to the post-translocational (POST) state as the newly formed A-site-bound peptidyl-tRNA and P-site-bound deacylated tRNA move to the P and E sites, respectively. Catalyzes the coordinated movement of the two tRNA molecules, the mRNA and conformational changes in the ribosome. This Sodalis glossinidius (strain morsitans) protein is Elongation factor G.